Reading from the N-terminus, the 288-residue chain is Protease HtpX homolog (288 aa).

2 helical membrane-spanning segments follow: residues 6–26 (TAFL…YVGG) and 28–48 (QGMM…YFFS). His-130 provides a ligand contact to Zn(2+). Glu-131 is a catalytic residue. Zn(2+) is bound at residue His-134. 2 helical membrane-spanning segments follow: residues 140-160 (ILTG…ANFA) and 179-199 (VIML…QMAI). Glu-204 contacts Zn(2+).

It belongs to the peptidase M48B family. The cofactor is Zn(2+).

It localises to the cell inner membrane. The chain is Protease HtpX homolog from Campylobacter concisus (strain 13826).